We begin with the raw amino-acid sequence, 85 residues long: Putative membrane protein insertion efficiency factor (85 aa).

It belongs to the UPF0161 family.

The protein localises to the cell inner membrane. Could be involved in insertion of integral membrane proteins into the membrane. This Sodalis glossinidius (strain morsitans) protein is Putative membrane protein insertion efficiency factor.